The primary structure comprises 1023 residues: uncharacterized protein (1023 aa).

Residues 1–35 (MAEKRPLGPLGPMMYGKLPRLEPDPGPGHSLPLSA) form a disordered region. K17 carries the post-translational modification N6-acetyllysine. A phosphoserine mark is found at S206 and S383. 5 disordered regions span residues 381–501 (GASP…PVID), 518–551 (PEPRAERDSAPATSKSQDKDCKGNLPAQDGASRS), 703–742 (PAPASAPPPSPAPAPAPASGPAPSSAQVPTAAPVDSPEQH), 907–980 (EART…TLRA), and 1002–1023 (KASGADRSSPHPQLLGSQTHHL). T389 carries the post-translational modification Phosphothreonine. Residues 391–400 (PSHSQNSVQP) are compositionally biased toward polar residues. 3 stretches are compositionally biased toward basic and acidic residues: residues 425–436 (RPAEKPTPEAQE), 443–454 (CRKEQLQPRPNE), and 477–490 (CAKERQSVPQKDAR). Phosphoserine is present on residues S493 and S494. A compositionally biased stretch (pro residues) spans 706–722 (ASAPPPSPAPAPAPASG). S912, S964, and S972 each carry phosphoserine. A compositionally biased stretch (low complexity) spans 963–972 (PSPSSGASTS).

This is an uncharacterized protein from Mus musculus (Mouse).